Reading from the N-terminus, the 94-residue chain is Cell division protein FtsB (94 aa).

At 1–8 the chain is on the cytoplasmic side; it reads MRLRSPYW. The helical transmembrane segment at 9–26 threads the bilayer; that stretch reads LFVVLILALAGLQYRLWV. Residues 27-94 lie on the Periplasmic side of the membrane; the sequence is GDGSLAQVRD…DGETLYQLAK (68 aa). Residues 31–78 adopt a coiled-coil conformation; the sequence is LAQVRDLQKQIADQHGENERLLERNRILEAEVAELKKGTETVEERARH.

The protein belongs to the FtsB family. As to quaternary structure, part of a complex composed of FtsB, FtsL and FtsQ.

The protein resides in the cell inner membrane. In terms of biological role, essential cell division protein. May link together the upstream cell division proteins, which are predominantly cytoplasmic, with the downstream cell division proteins, which are predominantly periplasmic. This Pseudomonas aeruginosa (strain ATCC 15692 / DSM 22644 / CIP 104116 / JCM 14847 / LMG 12228 / 1C / PRS 101 / PAO1) protein is Cell division protein FtsB.